The chain runs to 217 residues: MSAVKPLEAVARDRVGKGAARAVRRQGRVPAVIYGGGQSPQSISLDANQTHHLIYGGGFLSTVFEIAVDGRTIRAIPRDYQLDPVKDTPLHVDFLRVVSGQTIEVEVPVHFVNQDAAPGLKQKSGTLNVVLHTITLAVSPDAIPDAVNVDLTGKDIGDTVHVSDLVLPTGASLALAPSETVATLVPPTKLGADVEAEEAAVAEAARAGSAAEAAKEG.

It belongs to the bacterial ribosomal protein bL25 family. CTC subfamily. In terms of assembly, part of the 50S ribosomal subunit; part of the 5S rRNA/L5/L18/L25 subcomplex. Contacts the 5S rRNA. Binds to the 5S rRNA independently of L5 and L18.

Functionally, this is one of the proteins that binds to the 5S RNA in the ribosome where it forms part of the central protuberance. The polypeptide is Large ribosomal subunit protein bL25 (Methylobacterium sp. (strain 4-46)).